The following is a 376-amino-acid chain: c-di-GMP synthase (376 aa).

It belongs to the CD-NTase family. G05 subfamily.

The catalysed reaction is 2 GTP = 3',3'-c-di-GMP + 2 diphosphate. Its function is as follows. Cyclic nucleotide synthase (second messenger synthase) of a CBASS antivirus system. CBASS (cyclic oligonucleotide-based antiphage signaling system) provides immunity against bacteriophage. The CD-NTase protein synthesizes cyclic nucleotides in response to infection; these serve as specific second messenger signals. The signals activate a diverse range of effectors, leading to bacterial cell death and thus abortive phage infection. A type I-D CBASS(GG) system. In terms of biological role, cyclic dinucleotide synthase that catalyzes the synthesis of c-di-GMP, has no activity with other NTP substrates. In Roseivirga ehrenbergii (strain DSM 102268 / JCM 13514 / KCTC 12282 / NCIMB 14502 / KMM 6017), this protein is c-di-GMP synthase.